An 81-amino-acid polypeptide reads, in one-letter code: uncharacterized protein (81 aa).

The transit peptide at 1 to 20 (MYSRVLSVAAIVTMALAVQA) directs the protein to the mitochondrion. Positions 27–53 (YGNTTNSTGTTNGTNGTNTTTSSTATQ) are disordered. The segment covering 28 to 53 (GNTTNSTGTTNGTNGTNTTTSSTATQ) has biased composition (low complexity). The helical transmembrane segment at 59–79 (ITNFSSGAFVIAMIAVACSVM) threads the bilayer.

Its subcellular location is the mitochondrion membrane. This is an uncharacterized protein from Schizosaccharomyces pombe (strain 972 / ATCC 24843) (Fission yeast).